Here is a 274-residue protein sequence, read N- to C-terminus: MKRINKVLLSLLCLVIAYAGYSQIIPTYSVDSVTIQNLLPNVDEDTLVLINIDNTIITPKSKLFRYQDNAYINFTKYLYSLAANNASVNKTIAKLIVQRQMMLVESQWVDLINKMKNQGATVLGLQEITAPCNLIENYERWLYTILYGLNINFTRKVNDKEVFRFNPSDAEAPIFYLGIIFTGNINKVNTLIEFLKIIPIPPKKIVIFANNKKDLENMDSYLSMVDIGYYGIEYFGWQMLPGSPDNQIAELQQSTFLNTGQWLEDDTAAKMLNK.

The first 19 residues, methionine 1–alanine 19, serve as a signal peptide directing secretion.

This is an uncharacterized protein from Rickettsia prowazekii (strain Madrid E).